Consider the following 604-residue polypeptide: Elongation factor 4 (604 aa).

A tr-type G domain is found at 10 to 191 (KNIRNFSIIA…KIITTIPAPS (182 aa)). Residues 22–27 (DHGKST) and 138–141 (NKID) each bind GTP.

This sequence belongs to the TRAFAC class translation factor GTPase superfamily. Classic translation factor GTPase family. LepA subfamily.

It is found in the cell inner membrane. The enzyme catalyses GTP + H2O = GDP + phosphate + H(+). Its function is as follows. Required for accurate and efficient protein synthesis under certain stress conditions. May act as a fidelity factor of the translation reaction, by catalyzing a one-codon backward translocation of tRNAs on improperly translocated ribosomes. Back-translocation proceeds from a post-translocation (POST) complex to a pre-translocation (PRE) complex, thus giving elongation factor G a second chance to translocate the tRNAs correctly. Binds to ribosomes in a GTP-dependent manner. The sequence is that of Elongation factor 4 from Helicobacter pylori (strain P12).